The chain runs to 217 residues: NADH dehydrogenase (ubiquinone) 23 kDa subunit (217 aa).

A mitochondrion-targeting transit peptide spans 1–26 (MSLTMRIFTASRNGQRLFGSHGARLL). 4Fe-4S ferredoxin-type domains lie at 109–138 (RRYP…IEAE) and 148–177 (TRYD…EGPN). The [4Fe-4S] cluster site is built by Cys118, Cys121, Cys124, Cys128, Cys157, Cys160, Cys163, and Cys167.

It belongs to the complex I 23 kDa subunit family. Part of the mitochondrial membrane respiratory chain NADH dehydrogenase (Complex I). This is a component of the iron-sulfur (IP) fragment of the enzyme. It depends on [4Fe-4S] cluster as a cofactor. In terms of tissue distribution, expressed in muscles (at protein level).

Its subcellular location is the mitochondrion. It catalyses the reaction a ubiquinone + NADH + 5 H(+)(in) = a ubiquinol + NAD(+) + 4 H(+)(out). Its function is as follows. Core subunit of the mitochondrial membrane respiratory chain NADH dehydrogenase (Complex I) that is believed to belong to the minimal assembly required for catalysis. Complex I functions in the transfer of electrons from NADH to the respiratory chain. The immediate electron acceptor for the enzyme is believed to be ubiquinone. This Drosophila melanogaster (Fruit fly) protein is NADH dehydrogenase (ubiquinone) 23 kDa subunit.